The chain runs to 141 residues: NTDQSFPGFLGSEMWNPNTDLSEDCLYLNVWIPTPKPKNATVMIWIYGGSFQTGTSSLHVYDGKFLARVERVIVVSMNYRVGALGFLALPGNPEAPGNVGLFDQQLALQWVQKNIAAFGGNPKSVTLFGESAGAASVSLHL.

Asn39 carries N-linked (GlcNAc...) asparagine glycosylation. 49-50 (GS) lines the substrate pocket. The active-site Acyl-ester intermediate is the Ser131. Ser131 is modified (phosphoserine).

Belongs to the type-B carboxylesterase/lipase family. As to quaternary structure, homotetramer; disulfide-linked. Dimer of dimers. In terms of tissue distribution, present in most cells except erythrocytes.

The protein resides in the secreted. The enzyme catalyses an acylcholine + H2O = a carboxylate + choline + H(+). Its function is as follows. Esterase with broad substrate specificity. Contributes to the inactivation of the neurotransmitter acetylcholine. Can degrade neurotoxic organophosphate esters. This Ovis aries (Sheep) protein is Cholinesterase (BCHE).